We begin with the raw amino-acid sequence, 367 residues long: Putative zinc metalloprotease mll0638 (367 aa).

His20 contributes to the Zn(2+) binding site. Residue Glu21 is part of the active site. His24 lines the Zn(2+) pocket. The next 3 membrane-spanning stretches (helical) occupy residues Ala108–Ala130, Leu291–Leu313, and Met343–Phe365. The 76-residue stretch at Thr121–Lys196 folds into the PDZ domain.

Belongs to the peptidase M50B family. The cofactor is Zn(2+).

It is found in the cell inner membrane. This is Putative zinc metalloprotease mll0638 from Mesorhizobium japonicum (strain LMG 29417 / CECT 9101 / MAFF 303099) (Mesorhizobium loti (strain MAFF 303099)).